The chain runs to 658 residues: Protein teflon (658 aa).

The C2H2-type 1 zinc finger occupies 33 to 56 (LYCHFCRDLFTQLPEFLRHLQGAH). Disordered regions lie at residues 78-127 (EQDD…SEQK) and 151-175 (HINNESKPENGGFNGPCKKASSESN). The span at 100–111 (IPAKSEDSRAID) shows a compositional bias: basic and acidic residues. Over residues 118-127 (DNSPVKSEQK) the composition is skewed to polar residues. A C2H2-type 2; degenerate zinc finger spans residues 608 to 630 (YFCKCCDDIFTLNEDYTRHLVSQ). The segment at 634-657 (YQCTKCIKAFKYRGHFEKHLQNVH) adopts a C2H2-type 3 zinc-finger fold.

The protein belongs to the Teflon family.

The protein resides in the nucleus. It is found in the chromosome. Functionally, specifically required in males for proper segregation of autosomal bivalents at meiosis I. Expression is required in the male germ line prior to spermatocyte stage S4. May have a role as a bridging molecule maintaining adhesion to hold autosome bivalents together via heterochromatic connections. The protein is Protein teflon of Drosophila erecta (Fruit fly).